A 137-amino-acid chain; its full sequence is Small heat shock protein IbpA (137 aa).

The region spanning 28–137 (SQSNGGYPPY…ANKPRRIEIN (110 aa)) is the sHSP domain.

Belongs to the small heat shock protein (HSP20) family. In terms of assembly, monomer. Forms homomultimers of about 100-150 subunits at optimal growth temperatures. Conformation changes to monomers at high temperatures or high ionic concentrations.

It localises to the cytoplasm. Associates with aggregated proteins, together with IbpB, to stabilize and protect them from irreversible denaturation and extensive proteolysis during heat shock and oxidative stress. Aggregated proteins bound to the IbpAB complex are more efficiently refolded and reactivated by the ATP-dependent chaperone systems ClpB and DnaK/DnaJ/GrpE. Its activity is ATP-independent. The polypeptide is Small heat shock protein IbpA (Salmonella choleraesuis (strain SC-B67)).